We begin with the raw amino-acid sequence, 251 residues long: Dihydroorotate dehydrogenase B (NAD(+)), electron transfer subunit homolog (251 aa).

The FAD-binding FR-type domain maps to 2–101; sequence LAELNAEVLE…FLPLGKRLFS (100 aa). Positions 217, 222, 225, and 238 each coordinate [2Fe-2S] cluster.

The protein belongs to the PyrK family. The cofactor is [2Fe-2S] cluster. It depends on FAD as a cofactor.

The protein is Dihydroorotate dehydrogenase B (NAD(+)), electron transfer subunit homolog of Aquifex aeolicus (strain VF5).